We begin with the raw amino-acid sequence, 162 residues long: UPF0114 protein PA4574 (162 aa).

Helical transmembrane passes span 10-32 (YASR…ALTI), 53-75 (LILV…MVMI), and 136-156 (LMWY…MGYL).

This sequence belongs to the UPF0114 family.

It localises to the cell membrane. In Pseudomonas aeruginosa (strain ATCC 15692 / DSM 22644 / CIP 104116 / JCM 14847 / LMG 12228 / 1C / PRS 101 / PAO1), this protein is UPF0114 protein PA4574.